We begin with the raw amino-acid sequence, 467 residues long: Argininosuccinate lyase (467 aa).

The protein belongs to the lyase 1 family. Argininosuccinate lyase subfamily.

Its subcellular location is the cytoplasm. The enzyme catalyses 2-(N(omega)-L-arginino)succinate = fumarate + L-arginine. Its pathway is amino-acid biosynthesis; L-arginine biosynthesis; L-arginine from L-ornithine and carbamoyl phosphate: step 3/3. This Campylobacter curvus (strain 525.92) protein is Argininosuccinate lyase.